Here is a 279-residue protein sequence, read N- to C-terminus: Digeranylgeranylglyceryl phosphate synthase (279 aa).

6 helical membrane-spanning segments follow: residues 27–47 (LIAT…VALI), 90–110 (FVGG…IAII), 127–147 (VLGN…GGAF), 199–219 (TGIF…LPFG), 222–242 (WGLF…FGAF), and 259–279 (TSIL…AAVI).

The protein belongs to the UbiA prenyltransferase family. DGGGP synthase subfamily. Mg(2+) is required as a cofactor.

The protein resides in the cell membrane. It carries out the reaction sn-3-O-(geranylgeranyl)glycerol 1-phosphate + (2E,6E,10E)-geranylgeranyl diphosphate = 2,3-bis-O-(geranylgeranyl)-sn-glycerol 1-phosphate + diphosphate. Its pathway is membrane lipid metabolism; glycerophospholipid metabolism. In terms of biological role, prenyltransferase that catalyzes the transfer of the geranylgeranyl moiety of geranylgeranyl diphosphate (GGPP) to the C2 hydroxyl of (S)-3-O-geranylgeranylglyceryl phosphate (GGGP). This reaction is the second ether-bond-formation step in the biosynthesis of archaeal membrane lipids. The sequence is that of Digeranylgeranylglyceryl phosphate synthase from Methanoculleus marisnigri (strain ATCC 35101 / DSM 1498 / JR1).